A 277-amino-acid polypeptide reads, in one-letter code: Ribosomal RNA small subunit methyltransferase G (277 aa).

S-adenosyl-L-methionine contacts are provided by residues Gly-128, Phe-133, 188 to 189 (SE), and Arg-198.

It belongs to the methyltransferase superfamily. RNA methyltransferase RsmG family.

It is found in the cytoplasm. The enzyme catalyses guanosine(527) in 16S rRNA + S-adenosyl-L-methionine = N(7)-methylguanosine(527) in 16S rRNA + S-adenosyl-L-homocysteine. In terms of biological role, specifically methylates the N7 position of guanine in position 527 of 16S rRNA. In Nitrobacter winogradskyi (strain ATCC 25391 / DSM 10237 / CIP 104748 / NCIMB 11846 / Nb-255), this protein is Ribosomal RNA small subunit methyltransferase G.